Here is an 801-residue protein sequence, read N- to C-terminus: Probable inorganic carbon transporter subunit DabA (801 aa).

Zn(2+)-binding residues include cysteine 330, aspartate 332, histidine 489, and cysteine 504.

This sequence belongs to the inorganic carbon transporter (TC 9.A.2) DabA family. Forms a complex with DabB. Requires Zn(2+) as cofactor.

It is found in the cell inner membrane. Its function is as follows. Part of an energy-coupled inorganic carbon pump. The chain is Probable inorganic carbon transporter subunit DabA from Jannaschia sp. (strain CCS1).